Here is a 309-residue protein sequence, read N- to C-terminus: Probable manganese-dependent inorganic pyrophosphatase (309 aa).

Residues H9, D13, D15, D75, H97, and D149 each contribute to the Mn(2+) site.

This sequence belongs to the PPase class C family. The cofactor is Mn(2+).

The protein localises to the cytoplasm. It catalyses the reaction diphosphate + H2O = 2 phosphate + H(+). The protein is Probable manganese-dependent inorganic pyrophosphatase of Bacillus velezensis (strain DSM 23117 / BGSC 10A6 / LMG 26770 / FZB42) (Bacillus amyloliquefaciens subsp. plantarum).